Here is a 240-residue protein sequence, read N- to C-terminus: Glutamine transport ATP-binding protein GlnQ (240 aa).

The 235-residue stretch at 2-236 (IEFKNVSKHF…PPSQRLQEFL (235 aa)) folds into the ABC transporter domain. Residue 34-41 (GPSGSGKS) coordinates ATP.

The protein belongs to the ABC transporter superfamily. Heterotetramer with 2 subunits of GlnQ and 2 subunits of GlnP.

Its subcellular location is the cell inner membrane. Its function is as follows. Part of the binding-protein-dependent transport system for glutamine. Probably responsible for energy coupling to the transport system. This is Glutamine transport ATP-binding protein GlnQ (glnQ) from Escherichia coli (strain K12).